We begin with the raw amino-acid sequence, 400 residues long: Acetate kinase (400 aa).

Asn10 lines the Mg(2+) pocket. Lys17 contributes to the ATP binding site. Residue Arg91 participates in substrate binding. Asp148 acts as the Proton donor/acceptor in catalysis. ATP-binding positions include 208 to 212, 283 to 285, and 331 to 335; these read HLGNG, DCR, and GIGEN. Glu385 contacts Mg(2+).

This sequence belongs to the acetokinase family. Homodimer. The cofactor is Mg(2+). Requires Mn(2+) as cofactor.

It localises to the cytoplasm. It catalyses the reaction acetate + ATP = acetyl phosphate + ADP. The protein operates within metabolic intermediate biosynthesis; acetyl-CoA biosynthesis; acetyl-CoA from acetate: step 1/2. Functionally, catalyzes the formation of acetyl phosphate from acetate and ATP. Can also catalyze the reverse reaction. This is Acetate kinase from Shewanella frigidimarina (strain NCIMB 400).